Reading from the N-terminus, the 418-residue chain is Neurotensin receptor type 1 (418 aa).

Topologically, residues 1 to 67 (MRLNSSAPGT…TDIYSKVLVT (67 aa)) are extracellular. Residues Asn-4, Asn-37, and Asn-41 are each glycosylated (N-linked (GlcNAc...) asparagine). The helical transmembrane segment at 68 to 88 (AVYLALFVVGTVGNTVTAFTL) threads the bilayer. Residues 89-102 (ARKKSLQSLQSTVH) lie on the Cytoplasmic side of the membrane. A helical transmembrane segment spans residues 103–122 (YHLGSLALSDLLTLLLAMPV). The Extracellular portion of the chain corresponds to 123 to 142 (ELYNFIWVHHPWAFGDAGCR). The cysteines at positions 141 and 224 are disulfide-linked. Residues 143–164 (GYYFLRDACTYATALNVASLSV) traverse the membrane as a helical segment. At 165–184 (ERYLAICHPFKAKTLMSRSR) the chain is on the cytoplasmic side. A helical transmembrane segment spans residues 185–205 (TKKFISAIWLASALLAVPMLF). Topologically, residues 206-234 (TMGEQNRSADGQHAGGLVCTPTIHTATVK) are extracellular. The helical transmembrane segment at 235–259 (VVIQVNTFMSFIFPMVVISVLNTII) threads the bilayer. Topologically, residues 260–303 (ANKLTVMVRQAAEQGQVCTVGGEHSTFSMAIEPGRVQALRHGVR) are cytoplasmic. The chain crosses the membrane as a helical span at residues 304 to 325 (VLRAVVIAFVVCWLPYHVRRLM). Positions 321–344 (VRRLMFCYISDEQWTPFLYDFYHY) are neurotensin binding. The Extracellular segment spans residues 326 to 343 (FCYISDEQWTPFLYDFYH). A helical membrane pass occupies residues 344–364 (YFYMVTNALFYVSSTINPILY). Over 365–418 (NLVSANFRHIFLATLACLCPVWRRRRKRPAFSRKADSVSSNHTLSSNATRETLY) the chain is Cytoplasmic. Residues Cys-381 and Cys-383 are each lipidated (S-palmitoyl cysteine).

This sequence belongs to the G-protein coupled receptor 1 family. Neurotensin receptor subfamily. NTSR1 sub-subfamily. As to quaternary structure, interacts (palmitoylated form) with GNA11. Post-translationally, N-glycosylated. Palmitoylated; this is required for normal localization at membrane rafts and normal GNA11-mediated activation of down-stream signaling cascades. The palmitoylation level increases in response to neurotensin treatment. As to expression, expressed in prostate (at protein level). Detected in colon and peripheral blood mononuclear cells. Detected at very low levels in brain.

Its subcellular location is the cell membrane. The protein resides in the membrane raft. Its function is as follows. G-protein coupled receptor for the tridecapeptide neurotensin (NTS). Signaling is effected via G proteins that activate a phosphatidylinositol-calcium second messenger system. Signaling leads to the activation of downstream MAP kinases and protects cells against apoptosis. This chain is Neurotensin receptor type 1 (NTSR1), found in Homo sapiens (Human).